The primary structure comprises 206 residues: Recombination protein RecR (206 aa).

The C4-type zinc finger occupies 60–75 (CAMCNTFCEGGLCDIC). One can recognise a Toprim domain in the interval 83 to 178 (RRLMVVHMPA…KVSRLSQGIP (96 aa)).

Belongs to the RecR family.

May play a role in DNA repair. It seems to be involved in an RecBC-independent recombinational process of DNA repair. It may act with RecF and RecO. The chain is Recombination protein RecR from Neisseria meningitidis serogroup B (strain ATCC BAA-335 / MC58).